The chain runs to 168 residues: Photosystem I assembly protein Ycf3 (168 aa).

TPR repeat units follow at residues 29-62, 66-99, and 117-150; these read AFSY…EEDP, SYTL…NANL, and AQSL…APDN.

It belongs to the Ycf3 family.

The protein localises to the plastid. It localises to the chloroplast thylakoid membrane. In terms of biological role, essential for the assembly of the photosystem I (PSI) complex. May act as a chaperone-like factor to guide the assembly of the PSI subunits. The polypeptide is Photosystem I assembly protein Ycf3 (Phaeodactylum tricornutum (strain CCAP 1055/1)).